The primary structure comprises 430 residues: Glutamate-1-semialdehyde 2,1-aminomutase (430 aa).

Lysine 267 is subject to N6-(pyridoxal phosphate)lysine.

The protein belongs to the class-III pyridoxal-phosphate-dependent aminotransferase family. HemL subfamily. As to quaternary structure, homodimer. Pyridoxal 5'-phosphate serves as cofactor.

It localises to the cytoplasm. It catalyses the reaction (S)-4-amino-5-oxopentanoate = 5-aminolevulinate. It participates in porphyrin-containing compound metabolism; protoporphyrin-IX biosynthesis; 5-aminolevulinate from L-glutamyl-tRNA(Glu): step 2/2. The sequence is that of Glutamate-1-semialdehyde 2,1-aminomutase from Anaeromyxobacter dehalogenans (strain 2CP-1 / ATCC BAA-258).